The chain runs to 138 residues: 1,4-dihydroxy-2-naphthoyl-CoA hydrolase (138 aa).

The active site involves D16.

This sequence belongs to the 4-hydroxybenzoyl-CoA thioesterase family. DHNA-CoA hydrolase subfamily.

The enzyme catalyses 1,4-dihydroxy-2-naphthoyl-CoA + H2O = 1,4-dihydroxy-2-naphthoate + CoA + H(+). The protein operates within cofactor biosynthesis; phylloquinone biosynthesis. It functions in the pathway quinol/quinone metabolism; 1,4-dihydroxy-2-naphthoate biosynthesis; 1,4-dihydroxy-2-naphthoate from chorismate: step 7/7. Functionally, catalyzes the specific hydrolysis of 1,4-dihydroxy-2-naphthoyl-CoA (DHNA-CoA) to 1,4-dihydroxy-2-naphthoate (DHNA), a reaction involved in phylloquinone (vitamin K1) biosynthesis. Is not active on benzoyl-CoA, phenylacetyl-CoA and aliphatic acyl-CoA thioesters. In Synechocystis sp. (strain ATCC 27184 / PCC 6803 / Kazusa), this protein is 1,4-dihydroxy-2-naphthoyl-CoA hydrolase.